The chain runs to 101 residues: Urease subunit beta (101 aa).

This sequence belongs to the urease beta subunit family. As to quaternary structure, heterotrimer of UreA (gamma), UreB (beta) and UreC (alpha) subunits. Three heterotrimers associate to form the active enzyme.

Its subcellular location is the cytoplasm. The catalysed reaction is urea + 2 H2O + H(+) = hydrogencarbonate + 2 NH4(+). The protein operates within nitrogen metabolism; urea degradation; CO(2) and NH(3) from urea (urease route): step 1/1. This Bradyrhizobium sp. (strain BTAi1 / ATCC BAA-1182) protein is Urease subunit beta.